A 220-amino-acid chain; its full sequence is A-type ATP synthase subunit K (220 aa).

The next 6 membrane-spanning stretches (helical) occupy residues 5–25 (LILG…GSGI), 63–83 (FLVA…AMFA), 90–110 (LAGL…GAVA), 125–145 (LPET…VGVF), 155–175 (AALG…GQGI), and 195–215 (LVLA…AILI).

The protein belongs to the V-ATPase proteolipid subunit family. The A-type ATPase is composed of subunits A(3), B(3), C, D, E(1 or 2), F, H(2), I and K(x). Subunit K dimerizes and may form higher oligomers.

The protein localises to the cell membrane. In terms of biological role, component of the A-type ATP synthase that produces ATP from ADP in the presence of a proton gradient across the membrane. In Methanocaldococcus jannaschii (strain ATCC 43067 / DSM 2661 / JAL-1 / JCM 10045 / NBRC 100440) (Methanococcus jannaschii), this protein is A-type ATP synthase subunit K.